Here is an 83-residue protein sequence, read N- to C-terminus: Small ribosomal subunit protein uS17 (83 aa).

Belongs to the universal ribosomal protein uS17 family. As to quaternary structure, part of the 30S ribosomal subunit.

In terms of biological role, one of the primary rRNA binding proteins, it binds specifically to the 5'-end of 16S ribosomal RNA. The polypeptide is Small ribosomal subunit protein uS17 (Magnetococcus marinus (strain ATCC BAA-1437 / JCM 17883 / MC-1)).